The chain runs to 339 residues: MSKNAYAQSGVDVEAGYEVVERIKKHVARTERAGVMGGLGGFGGMFDLSKTGVKEPVLISGTDGVGTKLMLAIKYDKHDTIGQDCVAMCVNDIIAAGAEPLYFLDYVATGKNEPAKLEQVIAGVAEGCVQSGVALIGGETAEMPGMYGEDDYDLAGFAVGVAEKSQIIDGSKVAEGDVLLGLASSGIHSNGYSLVRRVFADYTGEEVLPELEGQKLKDVLLEPTRIYVKAALPLIKEELVNGIAHITGGGFIENVPRMFSDDLAAEIDESKVPVLPIFKALEKYGEIKHEEMFEIFNMGIGLMFAVKPENVERVKELLDEPVYEIGRIVKKDGASVVIK.

This sequence belongs to the AIR synthase family.

Its subcellular location is the cytoplasm. The enzyme catalyses 2-formamido-N(1)-(5-O-phospho-beta-D-ribosyl)acetamidine + ATP = 5-amino-1-(5-phospho-beta-D-ribosyl)imidazole + ADP + phosphate + H(+). Its pathway is purine metabolism; IMP biosynthesis via de novo pathway; 5-amino-1-(5-phospho-D-ribosyl)imidazole from N(2)-formyl-N(1)-(5-phospho-D-ribosyl)glycinamide: step 2/2. The polypeptide is Phosphoribosylformylglycinamidine cyclo-ligase (Streptococcus thermophilus (strain ATCC BAA-250 / LMG 18311)).